The primary structure comprises 357 residues: THUMP domain-containing protein 1 (357 aa).

Polar residues predominate over residues 1–10 (MAARIQQSPQ). Disordered regions lie at residues 1 to 38 (MAAR…GPRQ) and 74 to 95 (GPEK…DDDV). A2 carries the post-translational modification N-acetylalanine. Phosphoserine is present on residues S8, S86, S88, and S119. Positions 147 to 254 (DIYKTKKKKT…KAVCCLSVVK (108 aa)) constitute a THUMP domain. S270 is modified (phosphoserine). 2 stretches are compositionally biased toward polar residues: residues 276–287 (QLNPKQAAQTGN) and 298–315 (KSSQ…QVVP). The interval 276–357 (QLNPKQAAQT…EGSESNENDL (82 aa)) is disordered.

Belongs to the THUMPD1 family. Interacts with NAT10. Binds tRNA.

Functions as a tRNA-binding adapter to mediate NAT10-dependent tRNA acetylation modifying cytidine to N4-acetylcytidine (ac4C). The sequence is that of THUMP domain-containing protein 1 (THUMPD1) from Bos taurus (Bovine).